A 520-amino-acid chain; its full sequence is Laccase-1 (520 aa).

The signal sequence occupies residues 1-19 (MRLSNALVLVAACISSVVA). 3 Plastocyanin-like domains span residues 21-145 (TRTF…FIVY), 157-305 (VDDE…LTLA), and 375-488 (TVPV…FAEA). Residues His-82 and His-84 each contribute to the Cu cation site. 2 disulfide bridges follow: Cys-103-Cys-509 and Cys-135-Cys-229. Asn-108 carries an N-linked (GlcNAc...) asparagine glycan. Cu cation is bound by residues His-127 and His-129. Asn-239 and Asn-299 each carry an N-linked (GlcNAc...) asparagine glycan. 7 residues coordinate Cu cation: His-417, His-420, His-422, His-470, Cys-471, His-472, and His-476. A glycan (N-linked (GlcNAc...) asparagine) is linked at Asn-492.

This sequence belongs to the multicopper oxidase family. Requires Cu cation as cofactor.

The protein resides in the secreted. The catalysed reaction is 4 hydroquinone + O2 = 4 benzosemiquinone + 2 H2O. Lignin degradation and detoxification of lignin-derived products. This chain is Laccase-1 (lcc1), found in Agaricus bisporus (White button mushroom).